A 755-amino-acid polypeptide reads, in one-letter code: MKNLNGRTHNACYHPYYHQSLHFAQQQQQQQQHHLQQQQQHMQQQQQQQQAPQQQLRHQQRQLPTQPAYQQSQSVAHNAFPLRSSSNNYGHVASSAYAASSGSHNSNNAAAMAAVCQMQNFFNQQQQQQQQLEFNNNCMPINYYQQQQQQHYPSESQSSASGWNPETPGQAQLALTATTCNTTAAATCNTTAAATTSTTATSAAAGSDNNHSDNFAMDASEIATFLANELFLQQLGNFETGQSVLTLTTPTLTPTTTRNIEDTLGHLLSDTQTDRVAGCAGFAVPKVLPNAIDVLGMGIPTGVSSLPLQQTFDLSLGQGSESEDSNASYNDTQMNEEQDTTDTSSAHTDSTSYQAGHIMAGSVNGGGVNNFSNVLAAVSSSRGSASVGSSNANTSNTPARRGGGRRPNRSTNMTPEEEQKRAVRRERNKQAAARCRKRRVDQTNELTEEVEQLEKRGESMRKEIEVLTNSKNQLEYLLATHRATCQKIRSDMLSVVTCNGLIAPAGLLSAGSSGSGASSHHNHNSNDSSNGTITGMDATLNSTGRSNSPLDLKPAANIDSLLMHIKDEPLDGAIDSGSSLDQDGPPPSKRITLPPMSTMPHVHLSTILTPTGASSGSLQTPITSTAPGGFGSAFPVTSNGSSINNINSIGNNMNSPTLNAHNKVPKERPNTLAFQRPLGQMHLTMANNKAGGPTQIQGVPIQTPSTGTFNFDSLMDGGTGLTPVSGPLVPNSSSTNKHPLELPTPTAEPSKLVSL.

2 stretches are compositionally biased toward low complexity: residues 23–66 (FAQQ…LPTQ) and 149–159 (QQHYPSESQSS). Disordered regions lie at residues 23 to 75 (FAQQ…SQSV), 149 to 168 (QQHY…PETP), 316 to 350 (LGQG…HTDS), and 383 to 440 (GSAS…KRRV). The segment covering 316-333 (LGQGSESEDSNASYNDTQ) has biased composition (polar residues). Composition is skewed to low complexity over residues 341 to 350 (TDTSSAHTDS) and 383 to 397 (GSAS…TSNT). Residues 418–481 (EQKRAVRRER…NQLEYLLATH (64 aa)) form the bZIP domain. The basic motif stretch occupies residues 420 to 439 (KRAVRRERNKQAAARCRKRR). Positions 446–453 (LTEEVEQL) are leucine-zipper. Over residues 510–531 (AGSSGSGASSHHNHNSNDSSNG) the composition is skewed to low complexity. Disordered stretches follow at residues 510–552 (AGSS…PLDL) and 716–755 (DGGT…LVSL). The segment covering 539-549 (TLNSTGRSNSP) has biased composition (polar residues). Ser548 carries the post-translational modification Phosphoserine.

The protein belongs to the bZIP family. Fos subfamily. Homodimer. Heterodimer with Jra. The kay-Jra heterodimer binds more stably to the AP-1 site than either of the two proteins alone. In terms of tissue distribution, early expression in the embryo is mesodermal and some of this expression is localized to a region surrounding the cephalic furrow. Later in embryonic development expression is ectodermal, corresponding to muscle attachment sites. Also observed in part of the mid- and hindgut and in the anal pad.

Its subcellular location is the nucleus. In terms of biological role, developmentally regulated transcription factor AP-1 binds and recognizes the enhancer DNA sequence: 5'-TGA[CG]TCA-3'. May play a role in the function or determination of a particular subset of cells in the developing embryo. It is able to carry out its function either independently of or in conjunction with Jra. This chain is Transcription factor kayak, isoforms A/B/F (kay), found in Drosophila melanogaster (Fruit fly).